The following is an 817-amino-acid chain: ABC transporter G family member STR (817 aa).

A disordered region spans residues 1 to 30 (MARLERDGTNKSLESLMDSHKPGGTTTNLN). Residues 1 to 542 (MARLERDGTN…RTVLNVIRTP (542 aa)) are Cytoplasmic-facing. One can recognise an ABC transporter domain in the interval 43 to 294 (LEFTNLSYSI…LSGFGRPVPD (252 aa)). Position 87–94 (87–94 (GPSGAGKS)) interacts with ATP. 3 disordered regions span residues 321–349 (QYQHDGHKPDPAAMTPVPKPPRTPYRRNT), 362–395 (GFTAGTPQPDSSQFGLDDDDNDDDENFDNSLERR), and 439–463 (RPPSWTPARTPGWTPGKTPLSGPRS). A compositionally biased stretch (polar residues) spans 362–375 (GFTAGTPQPDSSQF). Positions 377–388 (LDDDDNDDDENF) are enriched in acidic residues. The helical transmembrane segment at 543–563 (ELFASREIVLTVMALVLSTIF) threads the bilayer. Topologically, residues 564-579 (KNLGDTTFIDINRLLN) are extracellular. Residues 580 to 600 (FYIFAVCLVFFSSNDAVPSFI) traverse the membrane as a helical segment. Residues 601–621 (MERFIFIRETSHNAYRASSYV) lie on the Cytoplasmic side of the membrane. Residues 622-642 (ISSLIVYLPFFAVQGLTFAVI) traverse the membrane as a helical segment. Residues 643–657 (TKLMLHLKSNLFNFW) are Extracellular-facing. A helical membrane pass occupies residues 658-678 (MILFASLITTNAYVMLVSALV). At 679 to 681 (PSY) the chain is on the cytoplasmic side. The helical transmembrane segment at 682 to 702 (ITGYAVVIATTALFFLTCGFF) threads the bilayer. The Extracellular portion of the chain corresponds to 703-787 (LKRTQIPAYW…TMDITMESLW (85 aa)). N-linked (GlcNAc...) asparagine glycosylation is present at Asn-762. A helical membrane pass occupies residues 788–808 (YDILILLAWGVLYRFFFYLVL). The Cytoplasmic portion of the chain corresponds to 809–817 (RFYSKNERK).

The protein belongs to the ABC transporter superfamily. ABCG family. Stunted arbuscule (STR) subfamily. Heterodimerizes with STR2; the resulting transporter is located in the peri-arbuscular membrane. Expressed constitutively in the vascular tissue of roots.

The protein resides in the cell membrane. Its function is as follows. Together with STR2, required for arbuscule development in arbuscular mycorrhizal (AM) symbiosis. This chain is ABC transporter G family member STR, found in Medicago truncatula (Barrel medic).